Consider the following 580-residue polypeptide: MDKSTLKQLIDQAAGRKPADTIIKNAKIVDVYNARIIEGTLAIADSRFLGIDAAYTADNVINAHGQYVVPGLIDPHIHIESANVSPAVFGSLVTPHGTTTILADPHEIVNVAGMRGLEYMVASAKNTALDIKYTMPSCVPAANPTLETSGAVITADEIKQSYDQGLTYGLAEFMNYPGVVNADDGVLDELLVSLNARKMIDGHSPALHGQGLNAYAAAGVHNDHECTQVDEMLDRISRGMYVYLRYGTVSKNMPTLLKGVTPQNARFCCLCGDDLQSVTLRETGHLDESIRVAIQNGIDPLTAIQMATINTAQCTGLSDRGGIAPGLKADFLLVDDLEHFNVNQTFIDGQKIAANGAYLLPTDDSVAGFDDLLETVHLDNFSADQLKLNLTSDKAHVIGLQSISRTQNLVLPVAHDAEGDFHYKPSEDIVKVAVVERHHLTGNVGVGLLSGFGLQNGAIATSIGHDSHNLVVVGTNDADMVVAIDALKACQGGGVAVQNGQVIATLPFVIGGLMSTEPIDSLIAHQKAFNTICHEQLNVTAQFDPIMKLGAMPLDVIPNLRITDKGLVDVTKFEIIDINA.

The protein belongs to the metallo-dependent hydrolases superfamily. Adenine deaminase family. The cofactor is Mn(2+).

The catalysed reaction is adenine + H2O + H(+) = hypoxanthine + NH4(+). The polypeptide is Adenine deaminase 2 (Latilactobacillus sakei subsp. sakei (strain 23K) (Lactobacillus sakei subsp. sakei)).